The sequence spans 1019 residues: TOG array regulator of axonemal microtubules protein 2 (1019 aa).

Disordered regions lie at residues 28–54 (AGPR…PEPR), 131–158 (RRLS…PLHS), 249–311 (TPSR…AKKP), and 991–1019 (SLGG…FQLD). Positions 1007–1019 (SKTTGSSYPFQLD) are enriched in polar residues.

Belongs to the Crescerin family.

This Homo sapiens (Human) protein is TOG array regulator of axonemal microtubules protein 2.